The sequence spans 392 residues: Heat-inducible transcription repressor HrcA (392 aa).

It belongs to the HrcA family.

In terms of biological role, negative regulator of class I heat shock genes (grpE-dnaK-dnaJ and groELS operons). Prevents heat-shock induction of these operons. This is Heat-inducible transcription repressor HrcA from Chlamydia trachomatis serovar A (strain ATCC VR-571B / DSM 19440 / HAR-13).